The following is a 369-amino-acid chain: Anthranilate phosphoribosyltransferase (369 aa).

Residues Gly-85, 88–89, Thr-93, 95–98, 113–121, and Ser-125 contribute to the 5-phospho-alpha-D-ribose 1-diphosphate site; these read GD, NLST, and KHGNRAASS. Gly-85 lines the anthranilate pocket. Ser-97 is a Mg(2+) binding site. Asn-116 serves as a coordination point for anthranilate. An anthranilate-binding site is contributed by Arg-171. Asp-229 and Glu-230 together coordinate Mg(2+).

This sequence belongs to the anthranilate phosphoribosyltransferase family. Homodimer. It depends on Mg(2+) as a cofactor.

It carries out the reaction N-(5-phospho-beta-D-ribosyl)anthranilate + diphosphate = 5-phospho-alpha-D-ribose 1-diphosphate + anthranilate. It functions in the pathway amino-acid biosynthesis; L-tryptophan biosynthesis; L-tryptophan from chorismate: step 2/5. Functionally, catalyzes the transfer of the phosphoribosyl group of 5-phosphorylribose-1-pyrophosphate (PRPP) to anthranilate to yield N-(5'-phosphoribosyl)-anthranilate (PRA). In Frankia alni (strain DSM 45986 / CECT 9034 / ACN14a), this protein is Anthranilate phosphoribosyltransferase.